Reading from the N-terminus, the 168-residue chain is Protein B-Myc (168 aa).

Disordered regions lie at residues 26-94 (DDEE…DLPE) and 146-168 (EGAS…TCNT). Phosphoserine occurs at positions 59 and 67.

Its subcellular location is the nucleus. Functionally, seems to act as an inhibitor of cellular proliferation. The protein is Protein B-Myc (Mycb) of Rattus norvegicus (Rat).